The following is a 148-amino-acid chain: Putative nickel-responsive regulator (148 aa).

Histidine 88, histidine 99, histidine 101, and cysteine 107 together coordinate Ni(2+).

It belongs to the transcriptional regulatory CopG/NikR family. Ni(2+) is required as a cofactor.

In terms of biological role, transcriptional regulator. The protein is Putative nickel-responsive regulator of Helicobacter pylori (strain P12).